A 507-amino-acid polypeptide reads, in one-letter code: Dolichyl pyrophosphate Man9GlcNAc2 alpha-1,3-glucosyltransferase (507 aa).

At 1–3 (MEK) the chain is on the cytoplasmic side. The chain crosses the membrane as a helical span at residues 4-24 (WSLMTITVLLALTVRWTVSLG). The Lumenal segment spans residues 25-114 (SYSGAGKPPM…SQSHKLFMRT (90 aa)). N-linked (GlcNAc...) asparagine glycosylation occurs at Asn59. A helical transmembrane segment spans residues 115–135 (TVFVADLLIYIPAVILYCCSL). Residues 136 to 143 (KETSTKKK) are Cytoplasmic-facing. Residues 144–164 (VSSALCILLYPGLILIDHGHF) traverse the membrane as a helical segment. The Lumenal portion of the chain corresponds to 165-168 (QYNS). The helical transmembrane segment at 169-189 (VSLGFALWGVLCLSYDWDLLG) threads the bilayer. At 190–226 (SAAFCLALNYKQMELYHSLPFFCYLLGKCFKKGLKGK) the chain is on the cytoplasmic side. A helical membrane pass occupies residues 227 to 247 (GLLLLIKLAGTVVASFAVCWL). Residues 248–297 (PFCTDVEQIMQVLRRLFPIDRGLFEDKVANIWCSLSVLIKIKNVVSPQTQ) are Lumenal-facing. A helical transmembrane segment spans residues 298 to 318 (LKLSFAVTFLSLLPTCIKLTV). The Cytoplasmic segment spans residues 319–338 (QPSLRGFKLTLVSCALSFFL). The chain crosses the membrane as a helical span at residues 339-359 (FSFQVHEKSILLVSVPVCLII). At 360 to 361 (NE) the chain is on the lumenal side. A helical membrane pass occupies residues 362–382 (VPFMATWFLLVSTFSMLPLLL). Residues 383 to 387 (KDGLL) are Cytoplasmic-facing. Residues 388–408 (LPYAVTTLAFLSACVASFAIF) form a helical membrane-spanning segment. At 409–441 (EKTSAKDLQLKPFSQSLRGYVSWFKLFPKIVRS) the chain is on the lumenal side. Residues 442-462 (LFLLSVTLMGVLSVMSAAVHP) form a helical membrane-spanning segment. Over 463–473 (PQRFPDLFPVS) the chain is Cytoplasmic. A helical transmembrane segment spans residues 474-494 (VSSISCLHFLFFLVYFNVIIL). Over 495 to 507 (WDSKNSRNQKKVS) the chain is Lumenal.

It belongs to the ALG6/ALG8 glucosyltransferase family.

The protein resides in the endoplasmic reticulum membrane. It carries out the reaction an alpha-D-Man-(1-&gt;2)-alpha-D-Man-(1-&gt;2)-alpha-D-Man-(1-&gt;3)-[alpha-D-Man-(1-&gt;2)-alpha-D-Man-(1-&gt;3)-[alpha-D-Man-(1-&gt;2)-alpha-D-Man-(1-&gt;6)]-alpha-D-Man-(1-&gt;6)]-beta-D-Man-(1-&gt;4)-beta-D-GlcNAc-(1-&gt;4)-alpha-D-GlcNAc-diphospho-di-trans,poly-cis-dolichol + a di-trans,poly-cis-dolichyl beta-D-glucosyl phosphate = an alpha-D-Glc-(1-&gt;3)-alpha-D-Man-(1-&gt;2)-alpha-D-Man-(1-&gt;2)-alpha-D-Man-(1-&gt;3)-[alpha-D-Man-(1-&gt;2)-alpha-D-Man-(1-&gt;3)-[alpha-D-Man-(1-&gt;2)-alpha-D-Man-(1-&gt;6)]-alpha-D-Man-(1-&gt;6)]-beta-D-Man-(1-&gt;4)-beta-D-GlcNAc-(1-&gt;4)-alpha-D-GlcNAc-diphospho-di-trans,poly-cis-dolichol + a di-trans,poly-cis-dolichyl phosphate + H(+). The protein operates within protein modification; protein glycosylation. Its function is as follows. Dolichyl pyrophosphate Man9GlcNAc2 alpha-1,3-glucosyltransferase that operates in the biosynthetic pathway of dolichol-linked oligosaccharides, the glycan precursors employed in protein asparagine (N)-glycosylation. The assembly of dolichol-linked oligosaccharides begins on the cytosolic side of the endoplasmic reticulum membrane and finishes in its lumen. The sequential addition of sugars to dolichol pyrophosphate produces dolichol-linked oligosaccharides containing fourteen sugars, including two GlcNAcs, nine mannoses and three glucoses. Once assembled, the oligosaccharide is transferred from the lipid to nascent proteins by oligosaccharyltransferases. In the lumen of the endoplasmic reticulum, adds the first glucose residue from dolichyl phosphate glucose (Dol-P-Glc) onto the lipid-linked oligosaccharide intermediate Man(9)GlcNAc(2)-PP-Dol to produce Glc(1)Man(9)GlcNAc(2)-PP-Dol. Glc(1)Man(9)GlcNAc(2)-PP-Dol is a substrate for ALG8, the following enzyme in the biosynthetic pathway. The sequence is that of Dolichyl pyrophosphate Man9GlcNAc2 alpha-1,3-glucosyltransferase from Gallus gallus (Chicken).